The chain runs to 571 residues: Protein PNS1 (571 aa).

A disordered region spans residues 1 to 96 (MNDEEKHLAA…PDFPPDYNYK (96 aa)). At 1 to 118 (MNDEEKHLAA…AVPKPKWNDK (118 aa)) the chain is on the cytoplasmic side. Over residues 15–31 (YQPNMHYQQQQEKQTGY) the composition is skewed to polar residues. Composition is skewed to low complexity over residues 39–52 (QGGYNQNQNQDYYN) and 71–80 (GNPNDNYNNQ). The segment covering 81 to 90 (QPPPYTPDFP) has biased composition (pro residues). Residues 119 to 139 (IGLVILALIFSGYLALSIIVI) traverse the membrane as a helical segment. Over 140–166 (RAYAQTHSFQGWGIYSGENDYSLNTHT) the chain is Extracellular. The chain crosses the membrane as a helical span at residues 167-187 (LILYAFVLATAMVLSLLYFIA). The Cytoplasmic segment spans residues 188 to 189 (AR). The chain crosses the membrane as a helical span at residues 190–210 (VWTKQFIWITYILHLLFSWGT). Ala-211 is a topological domain (extracellular). The helical transmembrane segment at 212 to 232 (IYYLVVGYYSAGIVFIVFAAL) threads the bilayer. Over 233–263 (TTWWFWCSRKRIPFATIVLQTLIDVTRANPS) the chain is Cytoplasmic. The chain crosses the membrane as a helical span at residues 264-284 (VLVISAVGTVVGACFGTWFSF). Residues 285–311 (TIVSIYVKYDPDNRNPGCMTTGGSCSN) lie on the Extracellular side of the membrane. Residues 312-332 (GKLIGLILFAIFCGYYLTEVI) traverse the membrane as a helical segment. Over 333–369 (KNVIHVTISGVYGSWYYCSKSDQGMPKHAAMSSFRRA) the chain is Cytoplasmic. Residues 370–390 (VTYSLGSISLGSLIVSIINFI) form a helical membrane-spanning segment. Residues 391 to 406 (RQILSVLQQDARQSGD) are Extracellular-facing. Residues 407 to 427 (TLATVLLCFVQCCFGVLDWLV) traverse the membrane as a helical segment. Residues 428–472 (TYFNHYAYSYIALYGKAYVPSAKATWKLMQTRGIDAMVNDSLIGS) lie on the Cytoplasmic side of the membrane. The chain crosses the membrane as a helical span at residues 473–493 (VLSFGASFVAYAAALVAYCFL). The Extracellular portion of the chain corresponds to 494–503 (KYTDPSYNSG). The helical transmembrane segment at 504–524 (GGFYAPVVGLAFVIALQVSNI) threads the bilayer. Over 525–571 (TNVSLKSGCSTFFLALARDPEVLRVSYPQIYEEICRTYPPARDKLDI) the chain is Cytoplasmic.

The protein belongs to the CTL (choline transporter-like) family.

It is found in the cell membrane. Functionally, probably involved in transport through the plasma membrane. This is Protein PNS1 (PNS1) from Yarrowia lipolytica (strain CLIB 122 / E 150) (Yeast).